Consider the following 243-residue polypeptide: Large ribosomal subunit protein uL30 (243 aa).

The disordered stretch occupies residues 1–31; the sequence is MADKILTPESQLKKSKAQQKSAEQVAAERAA. Residues 18–28 are compositionally biased toward low complexity; sequence QQKSAEQVAAE.

It belongs to the universal ribosomal protein uL30 family.

This Eremothecium gossypii (strain ATCC 10895 / CBS 109.51 / FGSC 9923 / NRRL Y-1056) (Yeast) protein is Large ribosomal subunit protein uL30 (RPL7).